A 198-amino-acid chain; its full sequence is ATP-dependent Clp protease proteolytic subunit (198 aa).

The Nucleophile role is filled by Ser-98. Residue His-123 is part of the active site.

It belongs to the peptidase S14 family. Fourteen ClpP subunits assemble into 2 heptameric rings which stack back to back to give a disk-like structure with a central cavity, resembling the structure of eukaryotic proteasomes.

The protein localises to the cytoplasm. The catalysed reaction is Hydrolysis of proteins to small peptides in the presence of ATP and magnesium. alpha-casein is the usual test substrate. In the absence of ATP, only oligopeptides shorter than five residues are hydrolyzed (such as succinyl-Leu-Tyr-|-NHMec, and Leu-Tyr-Leu-|-Tyr-Trp, in which cleavage of the -Tyr-|-Leu- and -Tyr-|-Trp bonds also occurs).. In terms of biological role, cleaves peptides in various proteins in a process that requires ATP hydrolysis. Has a chymotrypsin-like activity. Plays a major role in the degradation of misfolded proteins. The protein is ATP-dependent Clp protease proteolytic subunit of Bacillus pumilus (strain SAFR-032).